The following is a 442-amino-acid chain: Histidinol dehydrogenase (442 aa).

Residues Tyr136, Gln197, and Asn220 each contribute to the NAD(+) site. Substrate-binding residues include Ser243, Gln265, and His268. The Zn(2+) site is built by Gln265 and His268. Residues Glu333 and His334 each act as proton acceptor in the active site. 4 residues coordinate substrate: His334, Asp367, Glu421, and His426. Asp367 contacts Zn(2+). His426 is a Zn(2+) binding site.

Belongs to the histidinol dehydrogenase family. Requires Zn(2+) as cofactor.

It catalyses the reaction L-histidinol + 2 NAD(+) + H2O = L-histidine + 2 NADH + 3 H(+). The protein operates within amino-acid biosynthesis; L-histidine biosynthesis; L-histidine from 5-phospho-alpha-D-ribose 1-diphosphate: step 9/9. Functionally, catalyzes the sequential NAD-dependent oxidations of L-histidinol to L-histidinaldehyde and then to L-histidine. In Pseudomonas fluorescens (strain ATCC BAA-477 / NRRL B-23932 / Pf-5), this protein is Histidinol dehydrogenase.